Consider the following 125-residue polypeptide: Large ribosomal subunit protein bL12 (125 aa).

The protein belongs to the bacterial ribosomal protein bL12 family. As to quaternary structure, homodimer. Part of the ribosomal stalk of the 50S ribosomal subunit. Forms a multimeric L10(L12)X complex, where L10 forms an elongated spine to which 2 to 4 L12 dimers bind in a sequential fashion. Binds GTP-bound translation factors.

Forms part of the ribosomal stalk which helps the ribosome interact with GTP-bound translation factors. Is thus essential for accurate translation. This chain is Large ribosomal subunit protein bL12, found in Anaeromyxobacter sp. (strain Fw109-5).